A 661-amino-acid chain; its full sequence is Fructose-1,6-bisphosphatase class 3 (661 aa).

This sequence belongs to the FBPase class 3 family. Mn(2+) is required as a cofactor.

It catalyses the reaction beta-D-fructose 1,6-bisphosphate + H2O = beta-D-fructose 6-phosphate + phosphate. It functions in the pathway carbohydrate biosynthesis; gluconeogenesis. The chain is Fructose-1,6-bisphosphatase class 3 from Clostridioides difficile (strain 630) (Peptoclostridium difficile).